Consider the following 336-residue polypeptide: Zinc transporter ZIP11 (336 aa).

7 helical membrane passes run 12–32, 44–64, 75–95, 188–208, 258–278, 280–300, and 316–336; these read LLGT…VFIF, LGFA…APAI, SFAF…VYLA, IMLL…AVGV, WYGQ…TIAI, LAEP…VYVV, and LASW…VGLG.

This sequence belongs to the ZIP transporter (TC 2.A.5) family.

Its subcellular location is the cell membrane. The protein localises to the nucleus. The protein resides in the cytoplasm. It localises to the golgi apparatus. Functionally, functions as a cellular zinc transporter. The protein is Zinc transporter ZIP11 (slc39a11) of Xenopus tropicalis (Western clawed frog).